The primary structure comprises 593 residues: Tyrosine-protein phosphatase non-receptor type 9 (593 aa).

Met1 carries the post-translational modification N-acetylmethionine. The segment at 1 to 20 (MEPATAPRPDMAPELTPEEE) is disordered. The region spanning 84-243 (EEPLRSEILS…NLGGYVKIDL (160 aa)) is the CRAL-TRIO domain. Residues 303-574 (IYEEYEDIRR…YFCYKAILEF (272 aa)) form the Tyrosine-protein phosphatase domain. Cys515 acts as the Phosphocysteine intermediate in catalysis.

It belongs to the protein-tyrosine phosphatase family. Non-receptor class 3 subfamily.

The protein resides in the cytoplasm. It catalyses the reaction O-phospho-L-tyrosyl-[protein] + H2O = L-tyrosyl-[protein] + phosphate. Protein-tyrosine phosphatase that could participate in the transfer of hydrophobic ligands or in functions of the Golgi apparatus. This chain is Tyrosine-protein phosphatase non-receptor type 9 (Ptpn9), found in Mus musculus (Mouse).